The following is a 103-amino-acid chain: DNA-directed RNA polymerase subunit omega (103 aa).

Positions 52 to 103 are disordered; the sequence is EIESGNVTIHPDPEGKREAVRRRIEEEKRRKEEEEKKIKEQIAKEKEDGEKI. Residues 62–103 are compositionally biased toward basic and acidic residues; that stretch reads PDPEGKREAVRRRIEEEKRRKEEEEKKIKEQIAKEKEDGEKI.

It belongs to the RNA polymerase subunit omega family. As to quaternary structure, the RNAP catalytic core consists of 2 alpha, 1 beta, 1 beta' and 1 omega subunit. When a sigma factor is associated with the core the holoenzyme is formed, which can initiate transcription.

It catalyses the reaction RNA(n) + a ribonucleoside 5'-triphosphate = RNA(n+1) + diphosphate. In terms of biological role, promotes RNA polymerase assembly. Latches the N- and C-terminal regions of the beta' subunit thereby facilitating its interaction with the beta and alpha subunits. The chain is DNA-directed RNA polymerase subunit omega from Streptococcus pneumoniae serotype 19F (strain G54).